Here is a 221-residue protein sequence, read N- to C-terminus: Ras-related protein RABA5a (221 aa).

Residue 21–28 (GDSAVGKS) coordinates GTP. Residues 43–51 (SKSTIGVEF) carry the Effector region motif. GTP is bound by residues 69–73 (DTAGQ), 127–130 (NKSD), and 157–158 (SA). 2 S-geranylgeranyl cysteine lipidation sites follow: Cys218 and Cys219.

Belongs to the small GTPase superfamily. Rab family.

Its subcellular location is the cell membrane. In terms of biological role, intracellular vesicle trafficking and protein transport. In Arabidopsis thaliana (Mouse-ear cress), this protein is Ras-related protein RABA5a (RABA5A).